The primary structure comprises 207 residues: MKFKDKLKFYVITDSNYSDEVSSVEKALKGGASSIQLRMKTSSTRKMIEVGNKLRTLTSEYDALFFVNDRLDVAQAVNADGIHVGIDDMPVSKIKEIAPNLIIGASAYNIDEMKTAEYEGADYLGVGAVYSTNTKLDARNLGLDGLKDISKIANLPIVAIGGINHSNVENVLECGVSGVAVVSAIVGAENILKSAENMHELIKKYIK.

Residues 36–40 and Asn68 each bind 4-amino-2-methyl-5-(diphosphooxymethyl)pyrimidine; that span reads QLRMK. 2 residues coordinate Mg(2+): Asp69 and Asp88. Ser106 is a 4-amino-2-methyl-5-(diphosphooxymethyl)pyrimidine binding site. 132-134 is a 2-[(2R,5Z)-2-carboxy-4-methylthiazol-5(2H)-ylidene]ethyl phosphate binding site; that stretch reads TNT. 4-amino-2-methyl-5-(diphosphooxymethyl)pyrimidine is bound at residue Lys135. 2-[(2R,5Z)-2-carboxy-4-methylthiazol-5(2H)-ylidene]ethyl phosphate is bound by residues Gly162 and 182-183; that span reads VS.

This sequence belongs to the thiamine-phosphate synthase family. The cofactor is Mg(2+).

It carries out the reaction 2-[(2R,5Z)-2-carboxy-4-methylthiazol-5(2H)-ylidene]ethyl phosphate + 4-amino-2-methyl-5-(diphosphooxymethyl)pyrimidine + 2 H(+) = thiamine phosphate + CO2 + diphosphate. The enzyme catalyses 2-(2-carboxy-4-methylthiazol-5-yl)ethyl phosphate + 4-amino-2-methyl-5-(diphosphooxymethyl)pyrimidine + 2 H(+) = thiamine phosphate + CO2 + diphosphate. The catalysed reaction is 4-methyl-5-(2-phosphooxyethyl)-thiazole + 4-amino-2-methyl-5-(diphosphooxymethyl)pyrimidine + H(+) = thiamine phosphate + diphosphate. The protein operates within cofactor biosynthesis; thiamine diphosphate biosynthesis; thiamine phosphate from 4-amino-2-methyl-5-diphosphomethylpyrimidine and 4-methyl-5-(2-phosphoethyl)-thiazole: step 1/1. Condenses 4-methyl-5-(beta-hydroxyethyl)thiazole monophosphate (THZ-P) and 2-methyl-4-amino-5-hydroxymethyl pyrimidine pyrophosphate (HMP-PP) to form thiamine monophosphate (TMP). The polypeptide is Thiamine-phosphate synthase (Methanococcus maripaludis (strain C5 / ATCC BAA-1333)).